We begin with the raw amino-acid sequence, 368 residues long: Probable endopolygalacturonase A (368 aa).

A signal peptide spans 1 to 18 (MRSVKLFGLAALGSLGAA). A propeptide spanning residues 19-31 (APAPSRVSDLTKR) is cleaved from the precursor. The cysteines at positions 35 and 50 are disulfide-linked. PbH1 repeat units follow at residues 140–162 (LEDS…SVQA), 167–192 (LIDI…DISE), 193–214 (STGV…AINS), 215–235 (GENI…SIGS), 244–265 (VKNV…RIKT), 273–295 (VSQV…VIEQ), and 307–352 (TTGV…DITG). Aspartate 207 serves as the catalytic Proton donor. A disulfide bridge connects residues cysteine 209 and cysteine 225. Residue histidine 229 is part of the active site. Asparagine 246 carries N-linked (GlcNAc...) asparagine glycosylation. Intrachain disulfides connect cysteine 335/cysteine 340 and cysteine 359/cysteine 368.

This sequence belongs to the glycosyl hydrolase 28 family.

It is found in the secreted. The catalysed reaction is (1,4-alpha-D-galacturonosyl)n+m + H2O = (1,4-alpha-D-galacturonosyl)n + (1,4-alpha-D-galacturonosyl)m.. Involved in maceration and soft-rotting of plant tissue. Hydrolyzes the 1,4-alpha glycosidic bonds of de-esterified pectate in the smooth region of the plant cell wall. This is Probable endopolygalacturonase A (pgaA) from Aspergillus fumigatus (strain CBS 144.89 / FGSC A1163 / CEA10) (Neosartorya fumigata).